The chain runs to 654 residues: Tetracycline resistance protein TetQ (654 aa).

In terms of domain architecture, tr-type G spans 1–244 (MNIINLGILA…AISSFILPPE (244 aa)). GTP contacts are provided by residues 10–17 (AHIDAGKT), 74–78 (DTPGH), and 128–131 (NKID).

This sequence belongs to the TRAFAC class translation factor GTPase superfamily. Classic translation factor GTPase family. TetM/TetO subfamily.

Its function is as follows. Abolishes the inhibitory effect of tetracyclin on protein synthesis by a non-covalent modification of the ribosomes. This Prevotella intermedia protein is Tetracycline resistance protein TetQ (tetQ).